The primary structure comprises 290 residues: Ribonuclease HIII (290 aa).

Residues 78–290 (LPLIGTDEVG…FKNTEKAKNA (213 aa)) form the RNase H type-2 domain. Residues Asp-84, Glu-85, and Asp-187 each coordinate a divalent metal cation.

This sequence belongs to the RNase HII family. RnhC subfamily. Requires Mn(2+) as cofactor. Mg(2+) serves as cofactor.

Its subcellular location is the cytoplasm. It catalyses the reaction Endonucleolytic cleavage to 5'-phosphomonoester.. In terms of biological role, endonuclease that specifically degrades the RNA of RNA-DNA hybrids. The protein is Ribonuclease HIII of Streptococcus pneumoniae serotype 2 (strain D39 / NCTC 7466).